An 860-amino-acid chain; its full sequence is Leucine--tRNA ligase (860 aa).

A 'HIGH' region motif is present at residues 42 to 52 (PYPSGRLHMGH). The short motif at 619–623 (KMSKS) is the 'KMSKS' region element. Lys622 lines the ATP pocket.

This sequence belongs to the class-I aminoacyl-tRNA synthetase family.

The protein resides in the cytoplasm. It carries out the reaction tRNA(Leu) + L-leucine + ATP = L-leucyl-tRNA(Leu) + AMP + diphosphate. This Yersinia pseudotuberculosis serotype O:3 (strain YPIII) protein is Leucine--tRNA ligase.